A 209-amino-acid polypeptide reads, in one-letter code: Glycerol-3-phosphate acyltransferase (209 aa).

Helical transmembrane passes span 7-27 (IELA…AIIV), 85-105 (AIIL…FFGF), 117-137 (VMFG…LFVA), 142-162 (ISSL…YLLA), and 166-183 (MAWV…FWRH).

Belongs to the PlsY family. As to quaternary structure, probably interacts with PlsX.

Its subcellular location is the cell inner membrane. The enzyme catalyses an acyl phosphate + sn-glycerol 3-phosphate = a 1-acyl-sn-glycero-3-phosphate + phosphate. It participates in lipid metabolism; phospholipid metabolism. Catalyzes the transfer of an acyl group from acyl-phosphate (acyl-PO(4)) to glycerol-3-phosphate (G3P) to form lysophosphatidic acid (LPA). This enzyme utilizes acyl-phosphate as fatty acyl donor, but not acyl-CoA or acyl-ACP. This is Glycerol-3-phosphate acyltransferase from Hydrogenovibrio crunogenus (strain DSM 25203 / XCL-2) (Thiomicrospira crunogena).